A 206-amino-acid chain; its full sequence is Protein-methionine-sulfoxide reductase heme-binding subunit MsrQ (206 aa).

A run of 5 helical transmembrane segments spans residues 13–33 (IAIWLAATLPLLWLVLSINLG), 79–99 (LLGLWCFAWGTLHLLSYSILE), 116–136 (PYLTLGIISWLVLLALALTST), 147–167 (WQKLHNWVYVVAILAPIHYLW), and 169–189 (VKTLSPWPIIYAVMAALLLLL).

Belongs to the MsrQ family. Heterodimer of a catalytic subunit (MsrP) and a heme-binding subunit (MsrQ). The cofactor is FMN. Heme b is required as a cofactor.

It is found in the cell inner membrane. Part of the MsrPQ system that repairs oxidized periplasmic proteins containing methionine sulfoxide residues (Met-O), using respiratory chain electrons. Thus protects these proteins from oxidative-stress damage caused by reactive species of oxygen and chlorine generated by the host defense mechanisms. MsrPQ is essential for the maintenance of envelope integrity under bleach stress, rescuing a wide series of structurally unrelated periplasmic proteins from methionine oxidation. MsrQ provides electrons for reduction to the reductase catalytic subunit MsrP, using the quinone pool of the respiratory chain. This Yersinia pestis bv. Antiqua (strain Antiqua) protein is Protein-methionine-sulfoxide reductase heme-binding subunit MsrQ.